We begin with the raw amino-acid sequence, 533 residues long: Nuclear receptor corepressor 1 (533 aa).

Over residues 1 to 17 (KDKGPPPKSRYEEELRT) the composition is skewed to basic and acidic residues. Residues 1–21 (KDKGPPPKSRYEEELRTRGKT) form a disordered region. Positions 29–33 (IDVII) match the CORNR box 1 motif. A disordered region spans residues 37–144 (IASDKDARER…EGMGQVPRTH (108 aa)). Residues 38–47 (ASDKDARERG) show a composition bias toward basic and acidic residues. Residues 48-59 (SQSSDSSSSLSS) are compositionally biased toward low complexity. 2 positions are modified to phosphoserine: Ser73 and Ser77. Positions 130–209 (PSSQAEGMGQ…QSQTVLHPRP (80 aa)) are ID1. The interval 145-148 (RLIT) is required for interaction with RARA in the absence of its ligand. The CORNR box 2 motif lies at 153-157 (ICQII). Over residues 165-180 (QVPSQPSTSTFQTSPS) the composition is skewed to low complexity. Residues 165–254 (QVPSQPSTST…SPPQGPAVHE (90 aa)) form a disordered region. Positions 181–204 (ALSSTPVRTKPSSRYSPESQSQTV) are enriched in polar residues. Phosphoserine occurs at positions 196, 214, 230, 245, and 278. The span at 218-236 (LVDKSRGSRPGKSPERSHI) shows a compositional bias: basic and acidic residues. The interval 306-367 (IFRKLNSSGG…EDIIRKALMG (62 aa)) is ID2. The CORNR box 3 signature appears at 357 to 361 (LEDII). Low complexity predominate over residues 382–399 (HPVGVVPGSASTSVVTSS). A disordered region spans residues 382-476 (HPVGVVPGSA…RPSSTGSTQF (95 aa)). Thr492 bears the Phosphothreonine mark. Ser529 and Ser531 each carry phosphoserine.

Belongs to the N-CoR nuclear receptor corepressors family. Forms a large corepressor complex that contains SIN3A/B and histone deacetylases HDAC1 and HDAC2. This complex associates with the thyroid receptor (TR) and the retinoid acid receptor (RAR) in the absence of ligand. Interacts directly with RARA; the interaction is facilitated with RARA trimethylation. Component of the N-Cor repressor complex, at least composed of CBFA2T3, HEXIM1, NCOR1, NCOR2, HDAC3, TBL1X, TBL1XR1, CORO2A and GPS2. Interacts with ZBTB33; the interaction serves to recruit the N-CoR complex to promoter regions containing methylated CpG dinucleotides. Interacts with TRIM28 and KDM3A. Interacts (via the RD1 domain) with BAZ1A (via its N-terminal); the interaction corepresses a number of NCOR1-regulated genes. Interacts with BCL6, C1D, DACH1, HEXIM1, HDAC7, RORA, RORC, SAP30, SIAH2, SIN3A and SIN3B. May interact with DEAF1. Interacts with RXRA. Interacts with SETD5. Interacts with VDR. Interacts with ZBTB7A. Interacts with AR. Interacts with HDAC3. In terms of processing, ubiquitinated; mediated by SIAH2 and leading to its subsequent proteasomal degradation.

Its subcellular location is the nucleus. In terms of biological role, mediates transcriptional repression by certain nuclear receptors. Part of a complex which promotes histone deacetylation and the formation of repressive chromatin structures which may impede the access of basal transcription factors. Participates in the transcriptional repressor activity produced by BCL6. Recruited by ZBTB7A to the androgen response elements/ARE on target genes, negatively regulates androgen receptor signaling and androgen-induced cell proliferation. Mediates the NR1D1-dependent repression and circadian regulation of TSHB expression. The NCOR1-HDAC3 complex regulates the circadian expression of the core clock gene ARTNL/BMAL1 and the genes involved in lipid metabolism in the liver. This chain is Nuclear receptor corepressor 1 (Ncor1), found in Rattus norvegicus (Rat).